A 689-amino-acid chain; its full sequence is Glycine--tRNA ligase beta subunit (689 aa).

The protein belongs to the class-II aminoacyl-tRNA synthetase family. As to quaternary structure, tetramer of two alpha and two beta subunits.

The protein localises to the cytoplasm. The enzyme catalyses tRNA(Gly) + glycine + ATP = glycyl-tRNA(Gly) + AMP + diphosphate. The sequence is that of Glycine--tRNA ligase beta subunit from Shigella boydii serotype 4 (strain Sb227).